The chain runs to 276 residues: Diaminopimelate epimerase (276 aa).

Residues Asn-13, Gln-46, and Asn-66 each contribute to the substrate site. Cys-75 serves as the catalytic Proton donor. Substrate is bound by residues 76–77, Asn-159, Asn-192, and 210–211; these read GN and ER. Cys-219 serves as the catalytic Proton acceptor. 220–221 contacts substrate; that stretch reads GS.

Belongs to the diaminopimelate epimerase family. In terms of assembly, homodimer.

The protein resides in the cytoplasm. It catalyses the reaction (2S,6S)-2,6-diaminopimelate = meso-2,6-diaminopimelate. It functions in the pathway amino-acid biosynthesis; L-lysine biosynthesis via DAP pathway; DL-2,6-diaminopimelate from LL-2,6-diaminopimelate: step 1/1. Catalyzes the stereoinversion of LL-2,6-diaminopimelate (L,L-DAP) to meso-diaminopimelate (meso-DAP), a precursor of L-lysine and an essential component of the bacterial peptidoglycan. This is Diaminopimelate epimerase from Vibrio atlanticus (strain LGP32) (Vibrio splendidus (strain Mel32)).